We begin with the raw amino-acid sequence, 234 residues long: GTP:AMP phosphotransferase, mitochondrial (234 aa).

24 to 29 (GSGKGT) provides a ligand contact to GTP. The tract at residues 45-74 (SSGDILRQEIKSESTLGREATTYIAQGKLL) is NMP. AMP contacts are provided by residues serine 46, arginine 51, 72–74 (KLL), 103–106 (GFPR), and glutamine 110. The LID stretch occupies residues 144 to 181 (NRYVHVPSGRVYNLQYNPPKVPGLDDITGEPLTKRLDD). GTP-binding positions include arginine 145 and 154 to 155 (VY). AMP contacts are provided by arginine 178 and arginine 189. Serine 218 contributes to the GTP binding site.

Belongs to the adenylate kinase family. AK3 subfamily. In terms of assembly, monomer.

Its subcellular location is the mitochondrion matrix. The enzyme catalyses a ribonucleoside 5'-triphosphate + AMP = a ribonucleoside 5'-diphosphate + ADP. Involved in maintaining the homeostasis of cellular nucleotides by catalyzing the interconversion of nucleoside phosphates. Has GTP:AMP phosphotransferase and ITP:AMP phosphotransferase activities. Does not accept ATP as phosphate donor. In Saccharomyces cerevisiae (Baker's yeast), this protein is GTP:AMP phosphotransferase, mitochondrial.